The following is a 611-amino-acid chain: Exonuclease V, mitochondrial (611 aa).

The interval 19 to 42 is disordered; that stretch reads VTSEHEQVQSISKEESRSLSSNDL. Basic and acidic residues predominate over residues 21–35; it reads SEHEQVQSISKEESR. [4Fe-4S] cluster contacts are provided by cysteine 147, cysteine 569, cysteine 572, and cysteine 578.

It belongs to the EXO5 family. Monomer. Mg(2+) serves as cofactor. It depends on [4Fe-4S] cluster as a cofactor.

It localises to the mitochondrion. Its function is as follows. Single strand DNA specific 5'exonuclease involved in mitochondrial DNA replication and recombination. Releases dinucleotides as main products of catalysis. Has the capacity to slide across 5'double-stranded DNA or 5'RNA sequences and resumes cutting two nucleotides downstream of the double-stranded-to-single-stranded junction or RNA-to-DNA junction, respectively. This Candida albicans (strain WO-1) (Yeast) protein is Exonuclease V, mitochondrial (EXO5).